The sequence spans 214 residues: ATP-dependent Clp protease proteolytic subunit 2 (214 aa).

Ser-110 serves as the catalytic Nucleophile. His-135 is an active-site residue.

It belongs to the peptidase S14 family. As to quaternary structure, fourteen ClpP subunits assemble into 2 heptameric rings which stack back to back to give a disk-like structure with a central cavity, resembling the structure of eukaryotic proteasomes.

It is found in the cytoplasm. It carries out the reaction Hydrolysis of proteins to small peptides in the presence of ATP and magnesium. alpha-casein is the usual test substrate. In the absence of ATP, only oligopeptides shorter than five residues are hydrolyzed (such as succinyl-Leu-Tyr-|-NHMec, and Leu-Tyr-Leu-|-Tyr-Trp, in which cleavage of the -Tyr-|-Leu- and -Tyr-|-Trp bonds also occurs).. Functionally, cleaves peptides in various proteins in a process that requires ATP hydrolysis. Has a chymotrypsin-like activity. Plays a major role in the degradation of misfolded proteins. The polypeptide is ATP-dependent Clp protease proteolytic subunit 2 (Mycobacterium bovis (strain ATCC BAA-935 / AF2122/97)).